A 206-amino-acid chain; its full sequence is Inactive ribonuclease-like protein 9 (206 aa).

The first 26 residues, 1–26, serve as a signal peptide directing secretion; the sequence is MMRTLITTHSLLLFLLLLQLLQPLQF. 3 disulfides stabilise this stretch: Cys-99–Cys-154, Cys-117–Cys-169, and Cys-124–Cys-131. Asn-132 carries an N-linked (GlcNAc...) asparagine glycan.

The protein belongs to the pancreatic ribonuclease family.

Its subcellular location is the secreted. In terms of biological role, does not exhibit any ribonuclease activity. In Saimiri boliviensis boliviensis (Bolivian squirrel monkey), this protein is Inactive ribonuclease-like protein 9 (RNASE9).